The primary structure comprises 99 residues: CTP synthase (99 aa).

The 99-residue stretch at 1-99 (TMVTKLEKDS…FIKAIIENNK (99 aa)) folds into the Glutamine amidotransferase type-1 domain. Residue Arg-28 participates in L-glutamine binding. Active-site residues include His-73 and Glu-75.

Belongs to the CTP synthase family. As to quaternary structure, homotetramer.

It carries out the reaction UTP + L-glutamine + ATP + H2O = CTP + L-glutamate + ADP + phosphate + 2 H(+). The enzyme catalyses L-glutamine + H2O = L-glutamate + NH4(+). It catalyses the reaction UTP + NH4(+) + ATP = CTP + ADP + phosphate + 2 H(+). The protein operates within pyrimidine metabolism; CTP biosynthesis via de novo pathway; CTP from UDP: step 2/2. With respect to regulation, allosterically activated by GTP, when glutamine is the substrate; GTP has no effect on the reaction when ammonia is the substrate. The allosteric effector GTP functions by stabilizing the protein conformation that binds the tetrahedral intermediate(s) formed during glutamine hydrolysis. Inhibited by the product CTP, via allosteric rather than competitive inhibition. Its function is as follows. Catalyzes the ATP-dependent amination of UTP to CTP with either L-glutamine or ammonia as the source of nitrogen. Regulates intracellular CTP levels through interactions with the four ribonucleotide triphosphates. The polypeptide is CTP synthase (Mycoplasma capricolum subsp. capripneumoniae).